Reading from the N-terminus, the 140-residue chain is Nucleoside diphosphate kinase (140 aa).

The ATP site is built by K11, F59, R87, T93, R104, and N114. H117 functions as the Pros-phosphohistidine intermediate in the catalytic mechanism.

It belongs to the NDK family. As to quaternary structure, homotetramer. Requires Mg(2+) as cofactor.

It localises to the cytoplasm. The enzyme catalyses a 2'-deoxyribonucleoside 5'-diphosphate + ATP = a 2'-deoxyribonucleoside 5'-triphosphate + ADP. It catalyses the reaction a ribonucleoside 5'-diphosphate + ATP = a ribonucleoside 5'-triphosphate + ADP. Major role in the synthesis of nucleoside triphosphates other than ATP. The ATP gamma phosphate is transferred to the NDP beta phosphate via a ping-pong mechanism, using a phosphorylated active-site intermediate. This chain is Nucleoside diphosphate kinase, found in Bradyrhizobium sp. (strain BTAi1 / ATCC BAA-1182).